A 448-amino-acid chain; its full sequence is Gamete and mating-type specific protein A (448 aa).

Residues 1–19 (MKLILVLLCLISTLFVVKG) form the signal peptide. The region spanning 30–157 (VSYHNKWRSS…PDKSEVSCSY (128 aa)) is the SCP domain. Residues Asn55, Asn98, and Asn119 are each glycosylated (N-linked (GlcNAc...) asparagine). Residues 171-242 (PKTTTPAPTT…PTTPAPTSTL (72 aa)) form a disordered region. A compositionally biased stretch (pro residues) spans 178-236 (PTTPAPTTPKPTTPAPTTPKPTTPAPTTPKPTTPAPTTPKPTTPAPTTPKPTTPAPTTP). Catalysis depends on residues Cys262, His397, and Asn415.

It belongs to the peptidase C1 family.

The protein resides in the secreted. Functionally, thiol protease that seems to be involved in the sexual development. This Dictyostelium discoideum (Social amoeba) protein is Gamete and mating-type specific protein A (gmsA).